The sequence spans 84 residues: uncharacterized protein (84 aa).

The region spanning 7–62 (IDVMLAKRKMSVTELSERVGITMANLSILKNGKAKAIRLSTLEAICKALECQPGDI) is the HTH cro/C1-type domain. The segment at residues 18–37 (VTELSERVGITMANLSILKN) is a DNA-binding region (H-T-H motif).

This is an uncharacterized protein from Bacillus subtilis (strain 168).